We begin with the raw amino-acid sequence, 71 residues long: Large ribosomal subunit protein bL31 (71 aa).

Residues Cys16, Cys18, Cys36, and Cys39 each contribute to the Zn(2+) site.

It belongs to the bacterial ribosomal protein bL31 family. Type A subfamily. Part of the 50S ribosomal subunit. The cofactor is Zn(2+).

Binds the 23S rRNA. The sequence is that of Large ribosomal subunit protein bL31 from Syntrophus aciditrophicus (strain SB).